The following is a 1384-amino-acid chain: DNA-directed RNA polymerase subunit beta'' (1384 aa).

Zn(2+) is bound by residues cysteine 224, cysteine 297, cysteine 304, and cysteine 307.

The protein belongs to the RNA polymerase beta' chain family. RpoC2 subfamily. In terms of assembly, in plastids the minimal PEP RNA polymerase catalytic core is composed of four subunits: alpha, beta, beta', and beta''. When a (nuclear-encoded) sigma factor is associated with the core the holoenzyme is formed, which can initiate transcription. Zn(2+) serves as cofactor.

Its subcellular location is the plastid. It localises to the chloroplast. It carries out the reaction RNA(n) + a ribonucleoside 5'-triphosphate = RNA(n+1) + diphosphate. DNA-dependent RNA polymerase catalyzes the transcription of DNA into RNA using the four ribonucleoside triphosphates as substrates. The polypeptide is DNA-directed RNA polymerase subunit beta'' (Sinapis alba (White mustard)).